The sequence spans 174 residues: MEESGDTCELTIVIMTVHAVMLESGFVLFDPDSSMRFSFSKKTLVSLNYTLPSVKGIVGLNFEKEAIVGSFVRVVSIDKRSYVHIVDLLMETLKSDEEEDTLSIDCKVLVWWRMIKDGIVTPLLVDLCYKTGLELPPCFISLPRELKHKILESLPGVDIGTLACVSSELRDMAS.

In terms of domain architecture, F-box spans 136-174 (PPCFISLPRELKHKILESLPGVDIGTLACVSSELRDMAS).

The sequence is that of F-box protein At1g70360 from Arabidopsis thaliana (Mouse-ear cress).